Here is a 356-residue protein sequence, read N- to C-terminus: Retinoic acid-induced protein 3 (356 aa).

The Extracellular portion of the chain corresponds to 1–35 (MTTPTTAPSGCRSDLDSRYHRLCDLAEGWGIALET). Residues 36–56 (LAAVGAVATVACMFALVFLIC) form a helical membrane-spanning segment. The Cytoplasmic segment spans residues 57-68 (KVQDSNKRKMLP). The helical transmembrane segment at 69 to 89 (AQFLFLLGVLGVFGLTFAFII) threads the bilayer. Residues 90–101 (KLDGATGPTRFF) lie on the Extracellular side of the membrane. The helical transmembrane segment at 102–122 (LFGVLFAICFSCLLAHAFNLI) threads the bilayer. Residues 123 to 131 (KLVRGRKPL) lie on the Cytoplasmic side of the membrane. The helical transmembrane segment at 132-152 (SWLVILSLAVGFSLVQDVIAI) threads the bilayer. The Extracellular portion of the chain corresponds to 153–178 (EYLVLTMNRTNVNVFSELPAPRRNED). N160 carries an N-linked (GlcNAc...) asparagine glycan. The helical transmembrane segment at 179-199 (FVMLLIYVLVLMVLTFFTSFL) threads the bilayer. At 200–214 (VFCGSFSGWKRHGFH) the chain is on the cytoplasmic side. Residues 215–235 (ICFTSFLSIAIWVAWIVLLLI) traverse the membrane as a helical segment. Residues 236–244 (PDIDRKWDD) lie on the Extracellular side of the membrane. Residues 245–265 (TILSTALVANGWVFLAFYILP) form a helical membrane-spanning segment. At 266 to 356 (EFRQLPRQRS…NDYEGRKGDS (91 aa)) the chain is on the cytoplasmic side. S303 carries the post-translational modification Phosphoserine. A phosphotyrosine mark is found at Y318 and Y321. Positions 336–356 (IPRAQAPASPYNDYEGRKGDS) are disordered. S344 is modified (phosphoserine). 2 positions are modified to phosphotyrosine: Y346 and Y349.

The protein belongs to the G-protein coupled receptor 3 family. As to quaternary structure, interacts (via its transmembrane domain) with EGFR. Phosphorylated in two conserved double-tyrosine motifs, Tyr 318/Tyr-321 and Tyr-346/Tyr-349 by EGFR. Tyr-318 and Tyr-321 are the preferred residues responsible for EGFR-mediated GPRC5A phosphorylation. As to expression, expressed predominantly in normal fetal and adult lung. Almost undetectable or expressed at very low levels in other tissues.

It is found in the cell membrane. In terms of biological role, orphan receptor. Could be involved in modulating differentiation and maintaining homeostasis of epithelial cells. This retinoic acid-inducible GPCR provides evidence for a possible interaction between retinoid and G-protein signaling pathways. Functions as a negative modulator of EGFR signaling. Acts as a lung tumor suppressor. The sequence is that of Retinoic acid-induced protein 3 (Gprc5a) from Mus musculus (Mouse).